A 310-amino-acid chain; its full sequence is tRNA methyltransferase 10 homolog B (310 aa).

Residues 55–94 are a coiled coil; that stretch reads RKQRNWERRLEVKKSKRKEEKLRKKLNRQDKDVSDAQLSK. The SAM-dependent MTase TRM10-type domain maps to 101–298; that stretch reads TKERLEGARA…AGIPPGKGFV (198 aa).

It belongs to the class IV-like SAM-binding methyltransferase superfamily. TRM10 family.

The enzyme catalyses guanosine(9) in tRNA + S-adenosyl-L-methionine = N(1)-methylguanosine(9) in tRNA + S-adenosyl-L-homocysteine + H(+). Functionally, S-adenosyl-L-methionine-dependent guanine N(1)-methyltransferase that catalyzes the formation of N(1)-methylguanine at position 9 (m1G9) in tRNAs. Probably not able to catalyze formation of N(1)-methyladenine at position 9 (m1A9) in tRNAs. The polypeptide is tRNA methyltransferase 10 homolog B (trmt10b) (Danio rerio (Zebrafish)).